The following is a 210-amino-acid chain: Probable glutathione S-transferase gst-36 (210 aa).

Residues 2–79 enclose the GST N-terminal domain; it reads PHFKFYYFDV…YLGHQFHRAG (78 aa). Residues tyrosine 8, tryptophan 39, lysine 43, 49 to 51, and 63 to 64 contribute to the glutathione site; these read GQV and QT. In terms of domain architecture, GST C-terminal spans 81–210; it reads NAVDCARLDM…YVSQRKATPA (130 aa).

This sequence belongs to the GST superfamily. Sigma family.

The catalysed reaction is RX + glutathione = an S-substituted glutathione + a halide anion + H(+). Conjugation of reduced glutathione to a wide number of exogenous and endogenous hydrophobic electrophiles. This Caenorhabditis elegans protein is Probable glutathione S-transferase gst-36 (gst-36).